The primary structure comprises 45 residues: Turripeptide OL11-like (45 aa).

3 cysteine pairs are disulfide-bonded: Cys1–Cys31, Cys5–Cys24, and Cys13–Cys45. The 45-residue stretch at Cys1–Cys45 folds into the Kazal-like domain.

Belongs to the conopeptide P-like superfamily. In terms of tissue distribution, expressed by the venom duct.

Its subcellular location is the secreted. Functionally, acts as a neurotoxin by inhibiting an ion channel. May also act as a serine protease inhibitor, since it possess the kazal serine protease inhibitor signature. The chain is Turripeptide OL11-like from Lophiotoma albina (Sea snail).